Consider the following 101-residue polypeptide: Apolipoprotein C-II (101 aa).

Positions 1 to 22 (MGTRCLLVLLLVLLVLKCEVQG) are cleaved as a signal peptide. Positions 23 to 28 (DDMARQ) are cleaved as a propeptide — removed in mature form. The tract at residues 66 to 74 (AMDEKIRDM) is lipid binding. The tract at residues 78-101 (STAAVRIYTGILTDQILSMLTGDP) is lipoprotein lipase cofactor.

The protein belongs to the apolipoprotein C2 family. Post-translationally, proapolipoprotein C-II is synthesized as a sialic acid containing glycoprotein which is subsequently desialylated prior to its proteolytic processing. In terms of processing, proapolipoprotein C-II, the major form found in plasma undergoes proteolytic cleavage of its N-terminal hexapeptide to generate the mature form apolipoprotein C-II, which occurs as the minor form in plasma.

It is found in the secreted. Component of chylomicrons, very low-density lipoproteins (VLDL), low-density lipoproteins (LDL), and high-density lipoproteins (HDL) in plasma. Plays an important role in lipoprotein metabolism as an activator of lipoprotein lipase, the enzyme which hydrolyzes the triacylglycerols on chylomicrons and VLDL. The sequence is that of Apolipoprotein C-II (APOC2) from Panthera tigris altaica (Siberian tiger).